Here is a 151-residue protein sequence, read N- to C-terminus: Small ribosomal subunit protein uS15 (151 aa).

The protein belongs to the universal ribosomal protein uS15 family.

This chain is Small ribosomal subunit protein uS15 (RPS13), found in Agaricus bisporus (White button mushroom).